The chain runs to 446 residues: MSAVTSDTITFECETGNYHTFCPISCVAWLYQKIEDSFFLVIGTKTCGYFLQNALGVMIFAEPRYAMAELEEGDISAQLNDYKELTRLCNQIKKDRNPSVIVWIGTCTTEIIKMDLEGMAPKIELEINTPIVVARANGLDYAFTQGEDTVLAAMVERCPAKISLDSNSNKESKNPESEQAPLVLFGSLPSTVASQLNLELKRQGINVSGWLPAQRYTDLPILEKGTYVCGINPFLSRTATILMRRRKCKLIGAPFPIGPDGTRAWIEKICSVFNIQPQNLDERENQVWQSLEDYLQLVRGKSVFFMGDNLLEISLARFLIKCGMIVYEIGIPYMDKRYQAAELALLEKHCNDMNVPMPRIVEKPDNYNQIQRIKELQPDLAITGMAHANPLEARGISTKWSVEFTFAQIHGFTNARDILELVTRPLRRNNSLEGLGWNSLVKENIK.

Cysteine 22, cysteine 47, and cysteine 107 together coordinate [4Fe-4S] cluster.

The protein belongs to the BchN/ChlN family. Protochlorophyllide reductase is composed of three subunits; ChlL, ChlN and ChlB. Forms a heterotetramer of two ChlB and two ChlN subunits. [4Fe-4S] cluster serves as cofactor.

It localises to the plastid. Its subcellular location is the chloroplast. The catalysed reaction is chlorophyllide a + oxidized 2[4Fe-4S]-[ferredoxin] + 2 ADP + 2 phosphate = protochlorophyllide a + reduced 2[4Fe-4S]-[ferredoxin] + 2 ATP + 2 H2O. The protein operates within porphyrin-containing compound metabolism; chlorophyll biosynthesis (light-independent). Functionally, component of the dark-operative protochlorophyllide reductase (DPOR) that uses Mg-ATP and reduced ferredoxin to reduce ring D of protochlorophyllide (Pchlide) to form chlorophyllide a (Chlide). This reaction is light-independent. The NB-protein (ChlN-ChlB) is the catalytic component of the complex. This is Light-independent protochlorophyllide reductase subunit N from Mesostigma viride (Green alga).